Consider the following 232-residue polypeptide: Sugar fermentation stimulation protein homolog (232 aa).

This sequence belongs to the SfsA family.

The polypeptide is Sugar fermentation stimulation protein homolog (Pelagibacter ubique (strain HTCC1062)).